Reading from the N-terminus, the 658-residue chain is Translation factor GUF1, mitochondrial (658 aa).

The N-terminal 40 residues, 1-40 (MRGCLQTVRWLTSAWQRPPSYPPLSRAAPCRFFNVSIPRN), are a transit peptide targeting the mitochondrion. In terms of domain architecture, tr-type G spans 60–240 (DRFRNFCIVA…TVVEQIPAPV (181 aa)). GTP-binding positions include 69 to 76 (AHVDHGKS), 133 to 137 (DTPGH), and 187 to 190 (NKVD).

It belongs to the TRAFAC class translation factor GTPase superfamily. Classic translation factor GTPase family. LepA subfamily.

It localises to the mitochondrion inner membrane. The catalysed reaction is GTP + H2O = GDP + phosphate + H(+). Its function is as follows. Promotes mitochondrial protein synthesis. May act as a fidelity factor of the translation reaction, by catalyzing a one-codon backward translocation of tRNAs on improperly translocated ribosomes. Binds to mitochondrial ribosomes in a GTP-dependent manner. In Paracoccidioides brasiliensis (strain Pb03), this protein is Translation factor GUF1, mitochondrial.